The primary structure comprises 667 residues: Probable potassium transport system protein Kup (667 aa).

12 helical membrane-spanning segments follow: residues 5–25 (GLLI…LYVM), 47–67 (ISLI…IIAL), 88–108 (AAWL…DGTL), 133–153 (VSNQ…LFSI), 164–184 (AFGP…LINI), 210–230 (AGFA…ALYS), 243–263 (SWPF…VWIL), 287–307 (LASI…LITG), 336–356 (IYIP…VLFF), 367–387 (GLSI…WLVL), 393–413 (LANL…MGSS), and 420–440 (GGYV…VWYF).

Belongs to the HAK/KUP transporter (TC 2.A.72) family.

It is found in the cell membrane. The catalysed reaction is K(+)(in) + H(+)(in) = K(+)(out) + H(+)(out). Its function is as follows. Transport of potassium into the cell. Likely operates as a K(+):H(+) symporter. The polypeptide is Probable potassium transport system protein Kup (Lactobacillus delbrueckii subsp. bulgaricus (strain ATCC 11842 / DSM 20081 / BCRC 10696 / JCM 1002 / NBRC 13953 / NCIMB 11778 / NCTC 12712 / WDCM 00102 / Lb 14)).